We begin with the raw amino-acid sequence, 288 residues long: Nucleotide-binding protein AHA_3920 (288 aa).

8–15 (GRSGSGKT) contributes to the ATP binding site. Residue 56–59 (DVRN) coordinates GTP.

This sequence belongs to the RapZ-like family.

Functionally, displays ATPase and GTPase activities. The polypeptide is Nucleotide-binding protein AHA_3920 (Aeromonas hydrophila subsp. hydrophila (strain ATCC 7966 / DSM 30187 / BCRC 13018 / CCUG 14551 / JCM 1027 / KCTC 2358 / NCIMB 9240 / NCTC 8049)).